The chain runs to 64 residues: Cytochrome c oxidase subunit 2 (64 aa).

Residues 1–14 (MAHPSQLGFQDAAS) are Mitochondrial intermembrane-facing. Residues 15–45 (PVMEELXHFHDHTLMIVFLISTLVXYIIVAM) form a helical membrane-spanning segment. Over 46-64 (VSTKLTNKYVLDSQEIEIV) the chain is Mitochondrial matrix.

It belongs to the cytochrome c oxidase subunit 2 family. As to quaternary structure, component of the cytochrome c oxidase (complex IV, CIV), a multisubunit enzyme composed of 14 subunits. The complex is composed of a catalytic core of 3 subunits MT-CO1, MT-CO2 and MT-CO3, encoded in the mitochondrial DNA, and 11 supernumerary subunits COX4I, COX5A, COX5B, COX6A, COX6B, COX6C, COX7A, COX7B, COX7C, COX8 and NDUFA4, which are encoded in the nuclear genome. The complex exists as a monomer or a dimer and forms supercomplexes (SCs) in the inner mitochondrial membrane with NADH-ubiquinone oxidoreductase (complex I, CI) and ubiquinol-cytochrome c oxidoreductase (cytochrome b-c1 complex, complex III, CIII), resulting in different assemblies (supercomplex SCI(1)III(2)IV(1) and megacomplex MCI(2)III(2)IV(2)). Found in a complex with TMEM177, COA6, COX18, COX20, SCO1 and SCO2. Interacts with TMEM177 in a COX20-dependent manner. Interacts with COX20. Interacts with COX16. Requires Cu cation as cofactor.

The protein localises to the mitochondrion inner membrane. The enzyme catalyses 4 Fe(II)-[cytochrome c] + O2 + 8 H(+)(in) = 4 Fe(III)-[cytochrome c] + 2 H2O + 4 H(+)(out). Its function is as follows. Component of the cytochrome c oxidase, the last enzyme in the mitochondrial electron transport chain which drives oxidative phosphorylation. The respiratory chain contains 3 multisubunit complexes succinate dehydrogenase (complex II, CII), ubiquinol-cytochrome c oxidoreductase (cytochrome b-c1 complex, complex III, CIII) and cytochrome c oxidase (complex IV, CIV), that cooperate to transfer electrons derived from NADH and succinate to molecular oxygen, creating an electrochemical gradient over the inner membrane that drives transmembrane transport and the ATP synthase. Cytochrome c oxidase is the component of the respiratory chain that catalyzes the reduction of oxygen to water. Electrons originating from reduced cytochrome c in the intermembrane space (IMS) are transferred via the dinuclear copper A center (CU(A)) of subunit 2 and heme A of subunit 1 to the active site in subunit 1, a binuclear center (BNC) formed by heme A3 and copper B (CU(B)). The BNC reduces molecular oxygen to 2 water molecules using 4 electrons from cytochrome c in the IMS and 4 protons from the mitochondrial matrix. This chain is Cytochrome c oxidase subunit 2 (mt-co2), found in Scaphirhynchus platorynchus (Shovelnose sturgeon).